Reading from the N-terminus, the 177-residue chain is ATP synthase subunit delta (177 aa).

This sequence belongs to the ATPase delta chain family. As to quaternary structure, F-type ATPases have 2 components, F(1) - the catalytic core - and F(0) - the membrane proton channel. F(1) has five subunits: alpha(3), beta(3), gamma(1), delta(1), epsilon(1). F(0) has three main subunits: a(1), b(2) and c(10-14). The alpha and beta chains form an alternating ring which encloses part of the gamma chain. F(1) is attached to F(0) by a central stalk formed by the gamma and epsilon chains, while a peripheral stalk is formed by the delta and b chains.

It is found in the cell inner membrane. In terms of biological role, f(1)F(0) ATP synthase produces ATP from ADP in the presence of a proton or sodium gradient. F-type ATPases consist of two structural domains, F(1) containing the extramembraneous catalytic core and F(0) containing the membrane proton channel, linked together by a central stalk and a peripheral stalk. During catalysis, ATP synthesis in the catalytic domain of F(1) is coupled via a rotary mechanism of the central stalk subunits to proton translocation. Functionally, this protein is part of the stalk that links CF(0) to CF(1). It either transmits conformational changes from CF(0) to CF(1) or is implicated in proton conduction. The sequence is that of ATP synthase subunit delta from Erwinia tasmaniensis (strain DSM 17950 / CFBP 7177 / CIP 109463 / NCPPB 4357 / Et1/99).